A 199-amino-acid chain; its full sequence is MKIAVTGGYSSGKSSVSAVLTTLLDCFFISADIACKNELQVGATGWQQLKELWGPDYFSEDGEVDREAVREKIFLDPASKKELEAILHPLAHRQIVDAGLRADVCDKHLVAEIPLLFESDQSYDFDMVIVVSVAEDIAISRAMRRDDVRASLATSIIASQLPLAIKEARADFIINNDGLFAATYSQILFFVADRIEKKK.

In terms of domain architecture, DPCK spans 2–199 (KIAVTGGYSS…FVADRIEKKK (198 aa)). 10-15 (SSGKSS) is a binding site for ATP.

Belongs to the CoaE family.

It is found in the cytoplasm. It carries out the reaction 3'-dephospho-CoA + ATP = ADP + CoA + H(+). It participates in cofactor biosynthesis; coenzyme A biosynthesis; CoA from (R)-pantothenate: step 5/5. Functionally, catalyzes the phosphorylation of the 3'-hydroxyl group of dephosphocoenzyme A to form coenzyme A. In Desulfotalea psychrophila (strain LSv54 / DSM 12343), this protein is Dephospho-CoA kinase.